Consider the following 121-residue polypeptide: Large ribosomal subunit protein uL24 (121 aa).

The protein belongs to the universal ribosomal protein uL24 family. Part of the 50S ribosomal subunit.

Its function is as follows. One of two assembly initiator proteins, it binds directly to the 5'-end of the 23S rRNA, where it nucleates assembly of the 50S subunit. Functionally, located at the polypeptide exit tunnel on the outside of the subunit. The chain is Large ribosomal subunit protein uL24 from Methanocorpusculum labreanum (strain ATCC 43576 / DSM 4855 / Z).